The chain runs to 162 residues: CASP-like protein 0U1 (162 aa).

The Cytoplasmic segment spans residues 1–11 (MAAVEAAKTPR). Residues 12–32 (FILLIIEWVFALVAFAVMGHY) traverse the membrane as a helical segment. Residues 33–43 (LFDDRRSSFEY) lie on the Extracellular side of the membrane. The chain crosses the membrane as a helical span at residues 44 to 64 (LTAICILVWLVVMIYMVILCC). Topologically, residues 65 to 69 (GRALP) are cytoplasmic. The chain crosses the membrane as a helical span at residues 70-90 (PLIEAAIFLLFAILVFIAFLV). Residues 91–123 (TAVKCNNSETIVIAGQTISRKVCEGESEPKAAA) are Extracellular-facing. An N-linked (GlcNAc...) asparagine glycan is attached at N96. The chain crosses the membrane as a helical span at residues 124–144 (AFAFLLGLLLAGSSVLGCIAF). Over 145 to 162 (RRPSAPPLSSFQNPTSSV) the chain is Cytoplasmic.

It belongs to the Casparian strip membrane proteins (CASP) family. Homodimer and heterodimers.

It is found in the cell membrane. This Chlorokybus atmophyticus (Soil alga) protein is CASP-like protein 0U1.